The primary structure comprises 335 residues: Glucokinase (335 aa).

Position 11–16 (Ala11–Thr16) interacts with ATP.

It belongs to the bacterial glucokinase family.

The protein localises to the cytoplasm. It catalyses the reaction D-glucose + ATP = D-glucose 6-phosphate + ADP + H(+). The sequence is that of Glucokinase from Xanthomonas campestris pv. campestris (strain B100).